The sequence spans 1172 residues: Protein diaphanous homolog 3 (1172 aa).

A compositionally biased stretch (basic and acidic residues) spans 1–15 (MEKHRARALGRDSKA). Positions 1 to 36 (MEKHRARALGRDSKASRRKGLPSAPPAGPYELGEKR) are disordered. Residues 16–39 (SRRKGLPSAPPAGPYELGEKRPKL) carry the Nuclear localization signal motif. A Phosphothreonine modification is found at Thr47. The residue at position 56 (Ser56) is a Phosphoserine. Residues 57–96 (IRIPKGSKKERPPLPQLKTVSGSSDYSSVSSETMENNPKS) are disordered. Low complexity predominate over residues 77 to 87 (SGSSDYSSVSS). Residues 94-456 (PKSLSENEVL…QIVLHRDGID (363 aa)) form the GBD/FH3 domain. A Phosphoserine modification is found at Ser155. A coiled-coil region spans residues 493–530 (CKKFEKECTDHQETQAQLQKKEAKINELQAELQAFKSQ). Residues 535–586 (PPGTKIPLQTSAKGEPGPSAFPPAPPALGAGVPPPPPPPPPPPPPLPGMAMP) form a disordered region. Positions 541–611 (PLQTSAKGEP…GQNFIPLNLP (71 aa)) constitute an FH1 domain. Residues 553-581 (SAFPPAPPALGAGVPPPPPPPPPPPPPLP) show a composition bias toward pro residues. The region spanning 616-1014 (PKKEFKPEIS…EKRARIAKER (399 aa)) is the FH2 domain. One can recognise a DAD domain in the interval 1037–1067 (DETGVMDSLLEALQSGAAFRDRRKRTPKLKD). Ser1073 and Ser1158 each carry phosphoserine. A Nuclear export signal motif is present at residues 1163–1172 (EALLARLRAL).

It belongs to the formin homology family. Diaphanous subfamily. Ubiquitinated. As to expression, expressed in testis. Present in Sertoli cells (at protein level).

It is found in the cytoplasm. It localises to the nucleus. Its function is as follows. Actin nucleation and elongation factor required for the assembly of F-actin structures, such as actin cables and stress fibers. Required for cytokinesis, stress fiber formation and transcriptional activation of the serum response factor. Binds to GTP-bound form of Rho and to profilin: acts in a Rho-dependent manner to recruit profilin to the membrane, where it promotes actin polymerization. DFR proteins couple Rho and Src tyrosine kinase during signaling and the regulation of actin dynamics. Also acts as an actin nucleation and elongation factor in the nucleus by promoting nuclear actin polymerization inside the nucleus to drive serum-dependent SRF-MRTFA activity. The protein is Protein diaphanous homolog 3 of Rattus norvegicus (Rat).